The chain runs to 274 residues: Non-heme haloperoxidase (274 aa).

The 233-residue stretch at 22–254 folds into the AB hydrolase-1 domain; that stretch reads PIMFHHGWPL…RLKVYPGLSH (233 aa). Residues Ser-95, Asp-225, and His-254 contribute to the active site.

The protein belongs to the AB hydrolase superfamily. Bacterial non-heme haloperoxidase / perhydrolase family.

The polypeptide is Non-heme haloperoxidase (thcF) (Rhodococcus erythropolis (Arthrobacter picolinophilus)).